The following is a 381-amino-acid chain: tRNA-specific 2-thiouridylase MnmA (381 aa).

ATP is bound by residues 14–21 and M40; that span reads AMSGGVDS. Residue C108 is the Nucleophile of the active site. An intrachain disulfide couples C108 to C205. Residue G132 coordinates ATP. The interval 155 to 157 is interaction with tRNA; it reads KDQ. C205 acts as the Cysteine persulfide intermediate in catalysis. Positions 309–310 are interaction with tRNA; it reads RY.

It belongs to the MnmA/TRMU family.

It is found in the cytoplasm. It catalyses the reaction S-sulfanyl-L-cysteinyl-[protein] + uridine(34) in tRNA + AH2 + ATP = 2-thiouridine(34) in tRNA + L-cysteinyl-[protein] + A + AMP + diphosphate + H(+). Catalyzes the 2-thiolation of uridine at the wobble position (U34) of tRNA, leading to the formation of s(2)U34. The polypeptide is tRNA-specific 2-thiouridylase MnmA (Deinococcus geothermalis (strain DSM 11300 / CIP 105573 / AG-3a)).